Reading from the N-terminus, the 134-residue chain is Urease subunit beta (134 aa).

Belongs to the urease beta subunit family. Heterotrimer of UreA (gamma), UreB (beta) and UreC (alpha) subunits. Three heterotrimers associate to form the active enzyme.

The protein localises to the cytoplasm. It carries out the reaction urea + 2 H2O + H(+) = hydrogencarbonate + 2 NH4(+). Its pathway is nitrogen metabolism; urea degradation; CO(2) and NH(3) from urea (urease route): step 1/1. This chain is Urease subunit beta, found in Staphylococcus saprophyticus subsp. saprophyticus (strain ATCC 15305 / DSM 20229 / NCIMB 8711 / NCTC 7292 / S-41).